We begin with the raw amino-acid sequence, 350 residues long: GTPase Obg (350 aa).

Residues 1–159 enclose the Obg domain; sequence MKLVDEAEIE…RTLKLELKLL (159 aa). Residues 126–147 form a disordered region; sequence GNMHFKSSTNRSPRQALPGEPG. The 178-residue stretch at 160 to 337 folds into the OBG-type G domain; it reads ADVGLLGFPN…IMSRIMAFFD (178 aa). GTP-binding positions include 166–173, 191–195, 213–216, 287–290, and 318–320; these read GFPNAGKS, FTTLY, DIPG, NKAD, and SAL. Mg(2+)-binding residues include S173 and T193.

The protein belongs to the TRAFAC class OBG-HflX-like GTPase superfamily. OBG GTPase family. In terms of assembly, monomer. It depends on Mg(2+) as a cofactor.

It localises to the cytoplasm. An essential GTPase which binds GTP, GDP and possibly (p)ppGpp with moderate affinity, with high nucleotide exchange rates and a fairly low GTP hydrolysis rate. Plays a role in control of the cell cycle, stress response, ribosome biogenesis and in those bacteria that undergo differentiation, in morphogenesis control. In Stenotrophomonas maltophilia (strain K279a), this protein is GTPase Obg.